Here is a 631-residue protein sequence, read N- to C-terminus: uncharacterized protein (631 aa).

Residues methionine 1 to alanine 20 form the signal peptide. At histidine 21–histidine 105 the chain is on the lumenal side. N-linked (GlcNAc...) asparagine glycans are attached at residues asparagine 87 and asparagine 98. Residues isoleucine 106 to alanine 126 traverse the membrane as a helical segment. Topologically, residues arginine 127–tyrosine 131 are cytoplasmic. Residues leucine 132–phenylalanine 152 form a helical membrane-spanning segment. Residues lysine 153 to threonine 170 lie on the Lumenal side of the membrane. The chain crosses the membrane as a helical span at residues serine 171–valine 191. The Cytoplasmic portion of the chain corresponds to serine 192–histidine 322. A disordered region spans residues methionine 216–tyrosine 274. At serine 219 the chain carries Phosphoserine. Over residues alanine 220–aspartate 239 the composition is skewed to polar residues. Lysine 250 is covalently cross-linked (Glycyl lysine isopeptide (Lys-Gly) (interchain with G-Cter in ubiquitin)). Residues methionine 323 to glycine 343 traverse the membrane as a helical segment. Over asparagine 344–arginine 351 the chain is Lumenal. A helical membrane pass occupies residues isoleucine 352–serine 372. Residues leucine 373 to arginine 407 are Cytoplasmic-facing. The chain crosses the membrane as a helical span at residues phenylalanine 408 to glycine 428. Topologically, residues serine 429–histidine 451 are lumenal. A helical transmembrane segment spans residues valine 452–leucine 472. The Cytoplasmic portion of the chain corresponds to asparagine 473–tryptophan 529. A helical membrane pass occupies residues glycine 530–valine 550. Residues proline 551 to threonine 598 lie on the Lumenal side of the membrane. A helical membrane pass occupies residues phenylalanine 599–tryptophan 619. At lysine 620 to leucine 631 the chain is on the cytoplasmic side.

This sequence to S.pombe SpBC3B8.06.

The protein localises to the membrane. This is an uncharacterized protein from Saccharomyces cerevisiae (strain ATCC 204508 / S288c) (Baker's yeast).